The primary structure comprises 269 residues: MIRALLLSTLVAGALSCGVPTYPPQLSRVVGGEDARPNSWPWQVSLQYSSSGQWRHTCGGSLIEQNWVLTAAHCISSSRTYRVVVGRQSLSTVESGSLTIAVSKSVIHEKWNSNQLAQGNDIALLKLASSVPLTDKIQLGCLPAAGTILPNNYVCYVTGWGRLQSNGALPDILQQGKLLVVDYATCSNPSWWGSTVKTNMICAGGDGVTSSCNGDSGGPLNCQAANRQWQVHGIVSFGSSLGCNYYRKPSVFTRVSNYNDWISSVIENN.

Residues 1–16 (MIRALLLSTLVAGALS) form the signal peptide. Residues 17–28 (CGVPTYPPQLSR) constitute a propeptide, activation peptide. The region spanning 29–267 (VVGGEDARPN…YNDWISSVIE (239 aa)) is the Peptidase S1 domain. Cys-58 and Cys-74 are disulfide-bonded. Residues His-73 and Asp-121 each act as charge relay system in the active site. Intrachain disulfides connect Cys-155–Cys-222, Cys-186–Cys-202, and Cys-212–Cys-243. Ser-216 functions as the Charge relay system in the catalytic mechanism.

The protein belongs to the peptidase S1 family. Elastase subfamily. In terms of assembly, interacts with CPA1. Interacts with SERPINA1. Pancreas.

The protein resides in the secreted. It catalyses the reaction Preferential cleavage: Leu-|-Xaa, Met-|-Xaa and Phe-|-Xaa. Hydrolyzes elastin.. Its function is as follows. Elastase that enhances insulin signaling and might have a physiologic role in cellular glucose metabolism. Circulates in plasma and reduces platelet hyperactivation, triggers both insulin secretion and degradation, and increases insulin sensitivity. The sequence is that of Chymotrypsin-like elastase family member 2A (CELA2A) from Bos taurus (Bovine).